Reading from the N-terminus, the 245-residue chain is MPDYSYRPTIGRTYVYDNKYYKNLGSVIKNAKRKKHLLEHQEEEKSLDGLDHYIVAEDPFLGPGKNQKLTLFKEIRNVKPDTMKLIVNWSGKEFLRETWTRFVEDSFPIVNDQEVMDVFLVINLRPTRPNRCYKFLAQHALRWDCDYVPHEVIRIVEPSYVGMNNEYRISLAKKGGGCPIMNIHSEYTNSFESFVNRVIWENFYKPIVYIGTDSGEEEEILIEVSLVFKVKEFAPDAPLFTGPAY.

Belongs to the polyhedrin family.

Functionally, major component of the virus occlusion bodies, which are large proteinaceous structures (polyhedra), that protect the virus from the outside environment for extended periods until they are ingested by insect larvae. The protein is Polyhedrin of Lepidoptera (butterflies and moths).